A 119-amino-acid polypeptide reads, in one-letter code: Large ribosomal subunit protein bL20 (119 aa).

Belongs to the bacterial ribosomal protein bL20 family.

Functionally, binds directly to 23S ribosomal RNA and is necessary for the in vitro assembly process of the 50S ribosomal subunit. It is not involved in the protein synthesizing functions of that subunit. This is Large ribosomal subunit protein bL20 from Shewanella amazonensis (strain ATCC BAA-1098 / SB2B).